Consider the following 483-residue polypeptide: 6-phosphogluconate dehydrogenase, decarboxylating (483 aa).

NADP(+) contacts are provided by residues 10–15 (GLAVMG) and 33–35 (NRT). Lysine 38 bears the N6-acetyllysine mark. At serine 57 the chain carries Phosphoserine. Lysine 59 is modified (N6-acetyllysine). NADP(+)-binding positions include 75 to 77 (VKA) and asparagine 103. Substrate-binding positions include asparagine 103 and 129-131 (SGG). Serine 129 carries the post-translational modification Phosphoserine. Lysine 184 serves as the catalytic Proton acceptor. 187-188 (HN) lines the substrate pocket. Glutamate 191 (proton donor) is an active-site residue. Positions 192, 261, 288, 447, and 453 each coordinate substrate. 478 to 481 (SSSY) provides a ligand contact to NADP(+).

It belongs to the 6-phosphogluconate dehydrogenase family. In terms of assembly, homodimer.

The protein localises to the cytoplasm. The enzyme catalyses 6-phospho-D-gluconate + NADP(+) = D-ribulose 5-phosphate + CO2 + NADPH. It functions in the pathway carbohydrate degradation; pentose phosphate pathway; D-ribulose 5-phosphate from D-glucose 6-phosphate (oxidative stage): step 3/3. Functionally, catalyzes the oxidative decarboxylation of 6-phosphogluconate to ribulose 5-phosphate and CO(2), with concomitant reduction of NADP to NADPH. This is 6-phosphogluconate dehydrogenase, decarboxylating from Rattus norvegicus (Rat).